Consider the following 476-residue polypeptide: ATP synthase subunit beta (476 aa).

161–168 is a binding site for ATP; that stretch reads GGAGVGKT.

Belongs to the ATPase alpha/beta chains family. F-type ATPases have 2 components, CF(1) - the catalytic core - and CF(0) - the membrane proton channel. CF(1) has five subunits: alpha(3), beta(3), gamma(1), delta(1), epsilon(1). CF(0) has three main subunits: a(1), b(2) and c(9-12). The alpha and beta chains form an alternating ring which encloses part of the gamma chain. CF(1) is attached to CF(0) by a central stalk formed by the gamma and epsilon chains, while a peripheral stalk is formed by the delta and b chains.

It is found in the cell membrane. It catalyses the reaction ATP + H2O + 4 H(+)(in) = ADP + phosphate + 5 H(+)(out). Produces ATP from ADP in the presence of a proton gradient across the membrane. The catalytic sites are hosted primarily by the beta subunits. The polypeptide is ATP synthase subunit beta (Mycolicibacterium gilvum (strain PYR-GCK) (Mycobacterium gilvum (strain PYR-GCK))).